The following is a 337-amino-acid chain: MNSWDAGLAGLLVGTMGVSLLSNALVLLCLLHSADIRRQAPALFTLNLTCGNLLCTVVNMPLTLAGVVAQRQPAGDRLCRLAAFLDTFLAANSMLSMAALSIDRWVAVVFPLSYRAKMRLRDAALMVAYTWLHALTFPAAALALSWLGFHQLYASCTLCSRRPDERLRFAVFTGAFHALSFLLSFVVLCCTYLKVLKVARFHCKRIDVITMQTLVLLVDLHPSVRERCLEEQKRRRQRATKKISTFIGTFLVCFAPYVITRLVELFSTVPIGSHWGVLSKCLAYSKAASDPFVYSLLRHQYRKSCKEILNRLLHRRSIHSSGLTGDSHSQNILPVSE.

Over Met1–Gly10 the chain is Extracellular. The helical transmembrane segment at Leu11–Leu31 threads the bilayer. The Cytoplasmic segment spans residues His32 to Asn47. The helical transmembrane segment at Leu48–Val68 threads the bilayer. Over Ala69 to Leu81 the chain is Extracellular. A disulfide bond links Cys79 and Cys156. A helical membrane pass occupies residues Ala82–Ile102. The Cytoplasmic portion of the chain corresponds to Asp103 to Ala123. The helical transmembrane segment at Ala124–Leu144 threads the bilayer. The Extracellular portion of the chain corresponds to Ser145–Arg168. A helical membrane pass occupies residues Phe169 to Cys189. At Cys190–Thr245 the chain is on the cytoplasmic side. A helical transmembrane segment spans residues Phe246–Phe266. Residues Ser267–Gly276 lie on the Extracellular side of the membrane. The helical transmembrane segment at Val277–Leu297 threads the bilayer. Residues Arg298–Glu337 lie on the Cytoplasmic side of the membrane.

Belongs to the G-protein coupled receptor 1 family. In terms of tissue distribution, highly expressed in the CNS, the highest expression is seen in the amygdala, hippocampus and thalamus. Weak expression is detected in testis. Down-regulated in glioblastoma.

The protein localises to the cell membrane. Functionally, orphan receptor. Displays a significant level of constitutive activity. Its effect is mediated by G(s)-alpha protein that stimulate adenylate cyclase, resulting in an elevation of intracellular cAMP. This is G-protein coupled receptor 26 (GPR26) from Homo sapiens (Human).